Consider the following 314-residue polypeptide: Ribosomal protein L11 methyltransferase (314 aa).

Residues T161, G182, D204, and N248 each coordinate S-adenosyl-L-methionine.

This sequence belongs to the methyltransferase superfamily. PrmA family.

It is found in the cytoplasm. It catalyses the reaction L-lysyl-[protein] + 3 S-adenosyl-L-methionine = N(6),N(6),N(6)-trimethyl-L-lysyl-[protein] + 3 S-adenosyl-L-homocysteine + 3 H(+). Methylates ribosomal protein L11. The sequence is that of Ribosomal protein L11 methyltransferase from Listeria monocytogenes serotype 1/2a (strain 10403S).